The primary structure comprises 172 residues: Ribosome maturation factor RimM (172 aa).

One can recognise a PRC barrel domain in the interval 99-171 (DDIPTWNYFI…LLTVEVPDGL (73 aa)).

Belongs to the RimM family. In terms of assembly, binds ribosomal protein uS19.

The protein localises to the cytoplasm. An accessory protein needed during the final step in the assembly of 30S ribosomal subunit, possibly for assembly of the head region. Essential for efficient processing of 16S rRNA. May be needed both before and after RbfA during the maturation of 16S rRNA. It has affinity for free ribosomal 30S subunits but not for 70S ribosomes. This is Ribosome maturation factor RimM from Phocaeicola vulgatus (strain ATCC 8482 / DSM 1447 / JCM 5826 / CCUG 4940 / NBRC 14291 / NCTC 11154) (Bacteroides vulgatus).